A 353-amino-acid polypeptide reads, in one-letter code: Ribosome biogenesis protein BRX1 homolog (353 aa).

Positions 1-10 (MAATKRKRRG) are enriched in basic residues. The disordered stretch occupies residues 1 to 46 (MAATKRKRRGGFAVQAKKPKRNEIDAEPPAKRHATAEEVEEEERDR). Over residues 21–36 (RNEIDAEPPAKRHATA) the composition is skewed to basic and acidic residues. The Brix domain maps to 60–249 (ERILIFSSRG…LIKIFQGSFG (190 aa)). K160 participates in a covalent cross-link: Glycyl lysine isopeptide (Lys-Gly) (interchain with G-Cter in SUMO2). Residue S261 is modified to Phosphoserine. The residue at position 276 (K276) is an N6-acetyllysine. Residues K314 and K322 each participate in a glycyl lysine isopeptide (Lys-Gly) (interchain with G-Cter in SUMO2) cross-link.

This sequence belongs to the BRX1 family.

Its subcellular location is the nucleus. The protein resides in the nucleolus. Its function is as follows. Required for biogenesis of the 60S ribosomal subunit. The polypeptide is Ribosome biogenesis protein BRX1 homolog (BRIX1) (Homo sapiens (Human)).